The following is a 968-amino-acid chain: RNA polymerase-associated protein RapA (968 aa).

One can recognise a Helicase ATP-binding domain in the interval 164–334; it reads DVGRRHAPRV…FARLRLLDPN (171 aa). Residue 177–184 coordinates ATP; the sequence is DEVGLGKT. Residues 280 to 283 carry the DEAH box motif; sequence DEAH. One can recognise a Helicase C-terminal domain in the interval 490–685; the sequence is RVEWLMGYLT…ALKAQLEQGR (196 aa).

This sequence belongs to the SNF2/RAD54 helicase family. RapA subfamily. As to quaternary structure, interacts with the RNAP. Has a higher affinity for the core RNAP than for the holoenzyme. Its ATPase activity is stimulated by binding to RNAP.

In terms of biological role, transcription regulator that activates transcription by stimulating RNA polymerase (RNAP) recycling in case of stress conditions such as supercoiled DNA or high salt concentrations. Probably acts by releasing the RNAP, when it is trapped or immobilized on tightly supercoiled DNA. Does not activate transcription on linear DNA. Probably not involved in DNA repair. This is RNA polymerase-associated protein RapA from Salmonella schwarzengrund (strain CVM19633).